A 238-amino-acid polypeptide reads, in one-letter code: Protein shisa-3 homolog (238 aa).

Positions 1–21 are cleaved as a signal peptide; it reads MRALLALCLLLGWLRWGPAGA. The Lumenal portion of the chain corresponds to 22-98; sequence QQSGEYCHGW…GITAQPVYVP (77 aa). Residues 99 to 119 traverse the membrane as a helical segment; that stretch reads FLIVGSIFIAFIILGSVVAIY. Residues 120–238 are Cytoplasmic-facing; sequence CCTCLRPKEP…GKSCPDFSSS (119 aa). The interval 151 to 173 is disordered; the sequence is TSTSPRAPSRQSSTATSSSSTGG. A compositionally biased stretch (low complexity) spans 159 to 173; that stretch reads SRQSSTATSSSSTGG.

This sequence belongs to the shisa family.

The protein resides in the endoplasmic reticulum membrane. Plays an essential role in the maturation of presomitic mesoderm cells by individual attenuation of both FGF and WNT signaling. The protein is Protein shisa-3 homolog (SHISA3) of Homo sapiens (Human).